Reading from the N-terminus, the 323-residue chain is tRNA U34 carboxymethyltransferase (323 aa).

Carboxy-S-adenosyl-L-methionine is bound by residues K91, W105, K110, G130, 152 to 154, 181 to 182, M196, Y200, and R315; these read DPT and IE.

It belongs to the class I-like SAM-binding methyltransferase superfamily. CmoB family. Homotetramer.

It carries out the reaction carboxy-S-adenosyl-L-methionine + 5-hydroxyuridine(34) in tRNA = 5-carboxymethoxyuridine(34) in tRNA + S-adenosyl-L-homocysteine + H(+). Catalyzes carboxymethyl transfer from carboxy-S-adenosyl-L-methionine (Cx-SAM) to 5-hydroxyuridine (ho5U) to form 5-carboxymethoxyuridine (cmo5U) at position 34 in tRNAs. In Salmonella typhimurium (strain LT2 / SGSC1412 / ATCC 700720), this protein is tRNA U34 carboxymethyltransferase.